A 160-amino-acid polypeptide reads, in one-letter code: Probable small nuclear ribonucleoprotein-associated protein B (160 aa).

The 83-residue stretch at 4-86 folds into the Sm domain; it reads SKNNKMMAHL…IVSMTVDGPP (83 aa). A disordered region spans residues 80–160; sequence MTVDGPPPRD…YGGPPGGRPF (81 aa). Composition is skewed to gly residues over residues 99-113, 128-143, and 150-160; these read GGAG…GGRG, APGG…GGPG, and GYGGPPGGRPF.

This sequence belongs to the snRNP SmB/SmN family.

It localises to the nucleus. Its subcellular location is the cytoplasm. The protein localises to the cytosol. In terms of biological role, plays a role in pre-mRNA splicing as a core component of the spliceosomal U1, U2, U4 and U5 small nuclear ribonucleoproteins (snRNPs), the building blocks of the spliceosome. This Caenorhabditis elegans protein is Probable small nuclear ribonucleoprotein-associated protein B (snr-2).